The sequence spans 297 residues: Large ribosomal subunit protein uL18 (297 aa).

Gly-2 is subject to N-acetylglycine. An N6-acetyllysine mark is found at Lys-5 and Lys-48. Ser-185 is modified (phosphoserine). Lys-220 is subject to N6-acetyllysine; alternate. A Glycyl lysine isopeptide (Lys-Gly) (interchain with G-Cter in SUMO1); alternate cross-link involves residue Lys-220. Lys-220 participates in a covalent cross-link: Glycyl lysine isopeptide (Lys-Gly) (interchain with G-Cter in SUMO2); alternate. Thr-232 carries the post-translational modification Phosphothreonine. The tract at residues 253-297 is disordered; the sequence is YEKKPKREVKKKRWNRPKMSLAQKKDRVAQKKASFLRAQERAAES. The span at 258–268 shows a compositional bias: basic residues; sequence KREVKKKRWNR. Ser-272 is subject to Phosphoserine.

Belongs to the universal ribosomal protein uL18 family. As to quaternary structure, component of the large ribosomal subunit (LSU). Part of the 5S RNP complex, which is a LSU subcomplex composed of the 5S RNA, RPL5 and RPL11. Component of a hexameric 5S RNP precursor complex, composed of 5S RNA, RRS1, RPF2/BXDC1, RPL5, RPL11 and HEATR3; this complex acts as a precursor for ribosome assembly. Interacts with NVL in an ATP-dependent manner. Interacts with RRP1B. Interacts with IPO5, IPO7 and KPNB1; these interactions may be involved in RPL5 nuclear import for the assembly of ribosomal subunits.

Its subcellular location is the cytoplasm. The protein localises to the nucleus. The protein resides in the nucleolus. Component of the ribosome, a large ribonucleoprotein complex responsible for the synthesis of proteins in the cell. The small ribosomal subunit (SSU) binds messenger RNAs (mRNAs) and translates the encoded message by selecting cognate aminoacyl-transfer RNA (tRNA) molecules. The large subunit (LSU) contains the ribosomal catalytic site termed the peptidyl transferase center (PTC), which catalyzes the formation of peptide bonds, thereby polymerizing the amino acids delivered by tRNAs into a polypeptide chain. The nascent polypeptides leave the ribosome through a tunnel in the LSU and interact with protein factors that function in enzymatic processing, targeting, and the membrane insertion of nascent chains at the exit of the ribosomal tunnel. As part of the 5S RNP/5S ribonucleoprotein particle it is an essential component of the LSU, required for its formation and the maturation of rRNAs. It also couples ribosome biogenesis to p53/TP53 activation. As part of the 5S RNP it accumulates in the nucleoplasm and inhibits MDM2, when ribosome biogenesis is perturbed, mediating the stabilization and the activation of TP53. This chain is Large ribosomal subunit protein uL18 (Rpl5), found in Mus musculus (Mouse).